The chain runs to 117 residues: Phosphoribosyl-ATP pyrophosphatase (117 aa).

It belongs to the PRA-PH family.

It is found in the cytoplasm. It catalyses the reaction 1-(5-phospho-beta-D-ribosyl)-ATP + H2O = 1-(5-phospho-beta-D-ribosyl)-5'-AMP + diphosphate + H(+). Its pathway is amino-acid biosynthesis; L-histidine biosynthesis; L-histidine from 5-phospho-alpha-D-ribose 1-diphosphate: step 2/9. The protein is Phosphoribosyl-ATP pyrophosphatase of Rhodospirillum rubrum (strain ATCC 11170 / ATH 1.1.1 / DSM 467 / LMG 4362 / NCIMB 8255 / S1).